The primary structure comprises 445 residues: Phosphoglucosamine mutase (445 aa).

The active-site Phosphoserine intermediate is the S102. S102, D241, D243, and D245 together coordinate Mg(2+). Residue S102 is modified to Phosphoserine.

It belongs to the phosphohexose mutase family. It depends on Mg(2+) as a cofactor. Activated by phosphorylation.

The enzyme catalyses alpha-D-glucosamine 1-phosphate = D-glucosamine 6-phosphate. Functionally, catalyzes the conversion of glucosamine-6-phosphate to glucosamine-1-phosphate. This is Phosphoglucosamine mutase from Aliivibrio salmonicida (strain LFI1238) (Vibrio salmonicida (strain LFI1238)).